The following is a 156-amino-acid chain: Cell division protein SepF (156 aa).

The disordered stretch occupies residues 17 to 44 (PETADYYEDQQPAQQAPAPVPTPAPTRS).

The protein belongs to the SepF family. As to quaternary structure, homodimer. Interacts with FtsZ.

The protein resides in the cytoplasm. Cell division protein that is part of the divisome complex and is recruited early to the Z-ring. Probably stimulates Z-ring formation, perhaps through the cross-linking of FtsZ protofilaments. Its function overlaps with FtsA. In Limosilactobacillus fermentum (strain NBRC 3956 / LMG 18251) (Lactobacillus fermentum), this protein is Cell division protein SepF.